A 173-amino-acid chain; its full sequence is Alpha-crystallin A chain (173 aa).

N-acetylmethionine is present on methionine 1. Positions methionine 1 to glutamate 63 are required for complex formation with BFSP1 and BFSP2. The residue at position 6 (glutamine 6) is a Deamidated glutamine; partial. Position 45 is a phosphoserine (serine 45). Glutamine 50 carries the deamidated glutamine; partial modification. The 113-residue stretch at leucine 52–glutamate 164 folds into the sHSP domain. Lysine 70 and lysine 99 each carry N6-acetyllysine. Residues histidine 100, glutamate 102, and histidine 107 each coordinate Zn(2+). Serine 122 carries the phosphoserine modification. The residue at position 123 (asparagine 123) is a Deamidated asparagine; partial. Residues isoleucine 146–proline 167 show a composition bias toward basic and acidic residues. A disordered region spans residues isoleucine 146–serine 173. Zn(2+) is bound at residue histidine 154. Serine 162 is a glycosylation site (O-linked (GlcNAc) serine).

The protein belongs to the small heat shock protein (HSP20) family. In terms of assembly, heteromer composed of three CRYAA and one CRYAB subunits. Inter-subunit bridging via zinc ions enhances stability, which is crucial as there is no protein turn over in the lens. Can also form homodimers and homotetramers (dimers of dimers) which serve as the building blocks of homooligomers. Within homooligomers, the zinc-binding motif is created from residues of 3 different molecules. His-100 and Glu-102 from one molecule are ligands of the zinc ion, and His-107 and His-154 residues from additional molecules complete the site with tetrahedral coordination geometry. Part of a complex required for lens intermediate filament formation composed of BFSP1, BFSP2 and CRYAA. Post-translationally, acetylation at Lys-70 may increase chaperone activity. In terms of processing, undergoes age-dependent proteolytical cleavage at the C-terminus.

The protein localises to the cytoplasm. It localises to the nucleus. Functionally, contributes to the transparency and refractive index of the lens. Acts as a chaperone, preventing aggregation of various proteins under a wide range of stress conditions. Required for the correct formation of lens intermediate filaments as part of a complex composed of BFSP1, BFSP2 and CRYAA. This chain is Alpha-crystallin A chain (CRYAA), found in Osphranter rufus (Red kangaroo).